The chain runs to 132 residues: Small integral membrane protein 33 (132 aa).

The tract at residues 1 to 28 (MHQAGHYSWPSPAVNSSSEQEPQRQLPE) is disordered. N-linked (GlcNAc...) asparagine glycosylation is present at N15. Residues 43-63 (PVVTVIVAVFVLLAVCIIVAV) form a helical membrane-spanning segment. The disordered stretch occupies residues 99–132 (PQDSPEEAPPGPLVPGSCPAPDGPRPSIDEVTCL).

It is found in the membrane. The protein is Small integral membrane protein 33 of Homo sapiens (Human).